Reading from the N-terminus, the 337-residue chain is S-adenosylmethionine:tRNA ribosyltransferase-isomerase (337 aa).

Belongs to the QueA family. Monomer.

It is found in the cytoplasm. It catalyses the reaction 7-aminomethyl-7-carbaguanosine(34) in tRNA + S-adenosyl-L-methionine = epoxyqueuosine(34) in tRNA + adenine + L-methionine + 2 H(+). It functions in the pathway tRNA modification; tRNA-queuosine biosynthesis. In terms of biological role, transfers and isomerizes the ribose moiety from AdoMet to the 7-aminomethyl group of 7-deazaguanine (preQ1-tRNA) to give epoxyqueuosine (oQ-tRNA). This chain is S-adenosylmethionine:tRNA ribosyltransferase-isomerase, found in Legionella pneumophila subsp. pneumophila (strain Philadelphia 1 / ATCC 33152 / DSM 7513).